The chain runs to 731 residues: MMLVFLLIRRQWRSASVRREEVIRLIALATEESYLAEEVRPATVDYGGDSVSDVYRCAVCLYPTTTRCSQCKSVRYCSSKCQILHWRRGHKEECRSPDYDEEKEEYVQSDYDAKESNVDFPSRGTAYESSSNVSVDVACDMSTSRPSIHKVQPRSEAVDFTTSLNIKDNLYETRPLSRKKSRNRTDKVESASNYSKGKTDAKLRKLGNQNSRRSGDSANMSISDQFLSVGFEEEMNALKHERITSEPSSASAAMSSSSTLLLPSKANSKPKVSQASSSGLKTSVQKVVQHFRPPQSSKKSQPSSSIDEMSFSYELFVKLYCDRVELQPFGLVNLGNSCYANAVLQCLAFTRPLISYLIRGLHSKTCRKKSWCFVCEFEHLILKARGGESPLSPIKILSKLQKIGKHLGPGKEEDAHEFLRCAVDTMQSVFLKEAPAAGPFAEETTLVGLTFGGYLHSKIKCMACLHKSERPELMMDLTVEIDGDIGSLEEALAQFTAYEVLDGENRYFCGRCKSYQKAKKKLMILEGPNILTVVLKRFQSDNFGKLSKPIHFPELLDISPYMSDPNHGDHPVYSLYAVVVHLDAMSTLFSGHYVCYIKTLDGDWFKIDDSNVFPVQLETVLLEGAYMLLYARDSPRPVSKNGGRKSKQRRNLAAIPSRKGNKKQRDGDNNSLLPRVDWSSGSLSSMFSSSDTTSSCSTKDSSGIENLSDYLFGGVEPVWKWDRHNKSQTFD.

8 residues coordinate Zn(2+): C57, C60, C68, C71, C77, C81, H90, and C94. The segment at 57–94 (CAVCLYPTTTRCSQCKSVRYCSSKCQILHWRRGHKEEC) adopts an MYND-type zinc-finger fold. Disordered regions lie at residues 171–219 (YETR…DSAN) and 262–281 (LPSKANSKPKVSQASSSGLK). Polar residues-rich tracts occupy residues 207–219 (GNQNSRRSGDSAN) and 265–281 (KANSKPKVSQASSSGLK). In terms of domain architecture, USP spans 329–633 (FGLVNLGNSC…GAYMLLYARD (305 aa)). C338 acts as the Nucleophile in catalysis. H592 serves as the catalytic Proton acceptor. Residues 637–702 (PVSKNGGRKS…TSSCSTKDSS (66 aa)) form a disordered region. The span at 677–701 (DWSSGSLSSMFSSSDTTSSCSTKDS) shows a compositional bias: low complexity.

It belongs to the peptidase C19 family.

The catalysed reaction is Thiol-dependent hydrolysis of ester, thioester, amide, peptide and isopeptide bonds formed by the C-terminal Gly of ubiquitin (a 76-residue protein attached to proteins as an intracellular targeting signal).. Its function is as follows. Recognizes and hydrolyzes the peptide bond at the C-terminal Gly of ubiquitin. Involved in the processing of poly-ubiquitin precursors as well as that of ubiquitinated proteins. In Arabidopsis thaliana (Mouse-ear cress), this protein is Ubiquitin carboxyl-terminal hydrolase 17 (UBP17).